The primary structure comprises 445 residues: Phosphoglucosamine mutase (445 aa).

S99 acts as the Phosphoserine intermediate in catalysis. Mg(2+)-binding residues include S99, D242, D244, and D246. S99 bears the Phosphoserine mark.

Belongs to the phosphohexose mutase family. It depends on Mg(2+) as a cofactor. Activated by phosphorylation.

The catalysed reaction is alpha-D-glucosamine 1-phosphate = D-glucosamine 6-phosphate. Catalyzes the conversion of glucosamine-6-phosphate to glucosamine-1-phosphate. The polypeptide is Phosphoglucosamine mutase (Helicobacter pylori (strain HPAG1)).